The primary structure comprises 94 residues: ATP synthase F(0) complex subunit f, mitochondrial (94 aa).

Alanine 2 is subject to N-acetylalanine. Serine 3 carries the post-translational modification Phosphoserine. Lysine 22 is subject to N6-acetyllysine. A helical membrane pass occupies residues 68–85; sequence MVLACYVLFSYSFSYKHL.

The protein belongs to the ATPase F chain family. As to quaternary structure, component of the ATP synthase complex composed at least of ATP5F1A/subunit alpha, ATP5F1B/subunit beta, ATP5MC1/subunit c (homooctomer), MT-ATP6/subunit a, MT-ATP8/subunit 8, ATP5ME/subunit e, ATP5MF/subunit f, ATP5MG/subunit g, ATP5MK/subunit k, ATP5MJ/subunit j, ATP5F1C/subunit gamma, ATP5F1D/subunit delta, ATP5F1E/subunit epsilon, ATP5PF/subunit F6, ATP5PB/subunit b, ATP5PD/subunit d, ATP5PO/subunit OSCP. ATP synthase complex consists of a soluble F(1) head domain (subunits alpha(3) and beta(3)) - the catalytic core - and a membrane F(0) domain - the membrane proton channel (subunits c, a, 8, e, f, g, k and j). These two domains are linked by a central stalk (subunits gamma, delta, and epsilon) rotating inside the F1 region and a stationary peripheral stalk (subunits F6, b, d, and OSCP).

It localises to the mitochondrion. Its subcellular location is the mitochondrion inner membrane. Functionally, subunit f, of the mitochondrial membrane ATP synthase complex (F(1)F(0) ATP synthase or Complex V) that produces ATP from ADP in the presence of a proton gradient across the membrane which is generated by electron transport complexes of the respiratory chain. ATP synthase complex consist of a soluble F(1) head domain - the catalytic core - and a membrane F(1) domain - the membrane proton channel. These two domains are linked by a central stalk rotating inside the F(1) region and a stationary peripheral stalk. During catalysis, ATP synthesis in the catalytic domain of F(1) is coupled via a rotary mechanism of the central stalk subunits to proton translocation. In vivo, can only synthesize ATP although its ATP hydrolase activity can be activated artificially in vitro. Part of the complex F(0) domain. The sequence is that of ATP synthase F(0) complex subunit f, mitochondrial from Homo sapiens (Human).